Here is a 247-residue protein sequence, read N- to C-terminus: Ice-binding protein (247 aa).

A signal peptide spans 1-19 (MTFSILSIFVFGLISSSVA). N-linked (GlcNAc...) asparagine glycosylation occurs at N219.

Belongs to the ice-binding protein family.

Its subcellular location is the secreted. In terms of biological role, binds ice crystals and most probably inhibits their growth in order to prevent cell damage from extracellular ice. The polypeptide is Ice-binding protein (Flammulina populicola (Enokitake mushroom)).